Reading from the N-terminus, the 274-residue chain is 2,3,4,5-tetrahydropyridine-2,6-dicarboxylate N-succinyltransferase (274 aa).

It belongs to the transferase hexapeptide repeat family.

It is found in the cytoplasm. The catalysed reaction is (S)-2,3,4,5-tetrahydrodipicolinate + succinyl-CoA + H2O = (S)-2-succinylamino-6-oxoheptanedioate + CoA. Its pathway is amino-acid biosynthesis; L-lysine biosynthesis via DAP pathway; LL-2,6-diaminopimelate from (S)-tetrahydrodipicolinate (succinylase route): step 1/3. This chain is 2,3,4,5-tetrahydropyridine-2,6-dicarboxylate N-succinyltransferase, found in Shigella boydii serotype 18 (strain CDC 3083-94 / BS512).